A 314-amino-acid chain; its full sequence is Ornithine carbamoyltransferase (314 aa).

Carbamoyl phosphate-binding positions include 58–61 (STRT), Gln85, Arg109, and 136–139 (HPAQ). L-ornithine is bound by residues Asn169, Asp233, and 237 to 238 (SM). Residues 273–274 (CL) and Arg301 contribute to the carbamoyl phosphate site.

The protein belongs to the aspartate/ornithine carbamoyltransferase superfamily. OTCase family.

Its subcellular location is the cytoplasm. It carries out the reaction carbamoyl phosphate + L-ornithine = L-citrulline + phosphate + H(+). It participates in amino-acid degradation; L-arginine degradation via ADI pathway; carbamoyl phosphate from L-arginine: step 2/2. Its function is as follows. Reversibly catalyzes the transfer of the carbamoyl group from carbamoyl phosphate (CP) to the N(epsilon) atom of ornithine (ORN) to produce L-citrulline. The sequence is that of Ornithine carbamoyltransferase from Staphylothermus marinus (strain ATCC 43588 / DSM 3639 / JCM 9404 / F1).